Consider the following 289-residue polypeptide: D-alanine aminotransferase (289 aa).

Residue Tyr31 coordinates substrate. Arg50 contributes to the pyridoxal 5'-phosphate binding site. Positions 99 and 101 each coordinate substrate. Residue Lys147 is modified to N6-(pyridoxal phosphate)lysine. Residue Glu179 participates in pyridoxal 5'-phosphate binding.

Belongs to the class-IV pyridoxal-phosphate-dependent aminotransferase family. In terms of assembly, homodimer. Pyridoxal 5'-phosphate is required as a cofactor.

The catalysed reaction is D-alanine + 2-oxoglutarate = D-glutamate + pyruvate. Functionally, acts on the D-isomers of alanine, leucine, aspartate, glutamate, aminobutyrate, norvaline and asparagine. The enzyme transfers an amino group from a substrate D-amino acid to the pyridoxal phosphate cofactor to form pyridoxamine and an alpha-keto acid in the first half-reaction. The second half-reaction is the reverse of the first, transferring the amino group from the pyridoxamine to a second alpha-keto acid to form the product D-amino acid via a ping-pong mechanism. This is an important process in the formation of D-alanine and D-glutamate, which are essential bacterial cell wall components. This is D-alanine aminotransferase (dat) from Listeria monocytogenes serovar 1/2a (strain ATCC BAA-679 / EGD-e).